We begin with the raw amino-acid sequence, 305 residues long: Cbb3-type cytochrome c oxidase subunit CcoP2 (305 aa).

The next 2 membrane-spanning stretches (helical) occupy residues 4 to 24 (FWSW…VWLL) and 57 to 77 (WWFM…VLYP). 2 Cytochrome c domains span residues 130–209 (QALK…RSLS) and 219–300 (VDIE…YSLS). Positions 143, 146, 147, 186, 232, 235, 236, and 277 each coordinate heme c.

In terms of assembly, component of the cbb3-type cytochrome c oxidase at least composed of CcoN, CcoO, CcoQ and CcoP. It depends on heme c as a cofactor.

It localises to the cell inner membrane. The protein operates within energy metabolism; oxidative phosphorylation. C-type cytochrome. Part of the cbb3-type cytochrome c oxidase complex. CcoP subunit is required for transferring electrons from donor cytochrome c via its heme groups to CcoO subunit. From there, electrons are shuttled to the catalytic binuclear center of CcoN subunit where oxygen reduction takes place. The complex also functions as a proton pump. The protein is Cbb3-type cytochrome c oxidase subunit CcoP2 of Stutzerimonas stutzeri (Pseudomonas stutzeri).